Reading from the N-terminus, the 330-residue chain is MKNIKFIKPFFVEEIDENPISGKFIIKPLERGYGITVGNALRRVLLSSLPGTAIVNVKIQGVEQEFTTIPGVYEDVMTIILNLKKIVFAVDDESDDFEEKLELIAKGPQRLTASSFELPAGVKIINPDHYITTLSDDVCFHMTVTLKKGIGYVGAKDNKVHGENQVGVIAIDSLFTPVVNVSYQVEKKLGNKDELTIEITTNGALLAKEALATAASILVDHFNVLVELSQKPAHVEFVSESKKEAHNSVLDLEIEQLDLSVRLFNSLKRAGIDTVAALVKLSEKEVVKLKSLGRKSFQELKDKFLEYGLEFNDYLKEVLHHSVEEDKDKH.

The alpha N-terminal domain (alpha-NTD) stretch occupies residues 1–229; it reads MKNIKFIKPF…DHFNVLVELS (229 aa). Positions 245–330 are alpha C-terminal domain (alpha-CTD); that stretch reads AHNSVLDLEI…HSVEEDKDKH (86 aa).

The protein belongs to the RNA polymerase alpha chain family. In terms of assembly, homodimer. The RNAP catalytic core consists of 2 alpha, 1 beta, 1 beta' and 1 omega subunit. When a sigma factor is associated with the core the holoenzyme is formed, which can initiate transcription.

The catalysed reaction is RNA(n) + a ribonucleoside 5'-triphosphate = RNA(n+1) + diphosphate. In terms of biological role, DNA-dependent RNA polymerase catalyzes the transcription of DNA into RNA using the four ribonucleoside triphosphates as substrates. The polypeptide is DNA-directed RNA polymerase subunit alpha (Onion yellows phytoplasma (strain OY-M)).